The primary structure comprises 1116 residues: Large proline-rich protein bag6-B (1116 aa).

One can recognise a Ubiquitin-like domain in the interval 7-82 (MDVTVKTLDS…HLVERAPPQT (76 aa)). 7 disordered regions span residues 76–114 (ERAPPQTQTSTSGPSTSSSTSPSSSNAAPVPGAPERNGN), 170–221 (EGQP…PSEY), 329–385 (STTG…HPHP), 473–502 (PAAPSFNFQPGAAATTPPAPGGATTTAPGA), 533–589 (GGSS…GTDQ), 640–678 (VPVSTSPPQSASQAPPPPSSPAPPAHSAPPPAAAPESLP), and 1058–1080 (TGAKPESSTECVKRELDNSEAQG). Over residues 79–100 (PPQTQTSTSGPSTSSSTSPSSS) the composition is skewed to low complexity. A compositionally biased stretch (polar residues) spans 194 to 207 (RETLPQTTQNADGQ). The segment covering 208–219 (SNSTPTSHPSPS) has biased composition (low complexity). Residues 344 to 353 (GNATPSTNTS) show a composition bias toward polar residues. 3 stretches are compositionally biased toward low complexity: residues 482 to 502 (PGAAATTPPAPGGATTTAPGA), 535 to 580 (SSTS…SVPS), and 641 to 652 (PVSTSPPQSASQ). Over residues 653 to 672 (APPPPSSPAPPAHSAPPPAA) the composition is skewed to pro residues. Residues 1068 to 1080 (CVKRELDNSEAQG) show a composition bias toward basic and acidic residues.

In terms of assembly, component of the bag6/bat3 complex.

The protein localises to the cytoplasm. Its subcellular location is the cytosol. The protein resides in the nucleus. It is found in the secreted. It localises to the extracellular exosome. Its function is as follows. ATP-independent molecular chaperone preventing the aggregation of misfolded and hydrophobic patches-containing proteins. Functions as part of a cytosolic protein quality control complex, the bag6/bat3 complex, which maintains these client proteins in a soluble state and participates in their proper delivery to the endoplasmic reticulum or alternatively can promote their sorting to the proteasome where they undergo degradation. The bag6/bat3 complex is involved in the post-translational delivery of tail-anchored/type II transmembrane proteins to the endoplasmic reticulum membrane. Similarly, the bag6/bat3 complex also functions as a sorting platform for proteins of the secretory pathway that are mislocalized to the cytosol either delivering them to the proteasome for degradation or to the endoplasmic reticulum. The bag6/bat3 complex also plays a role in the endoplasmic reticulum-associated degradation (ERAD), a quality control mechanism that eliminates unwanted proteins of the endoplasmic reticulum through their retrotranslocation to the cytosol and their targeting to the proteasome. It maintains these retrotranslocated proteins in an unfolded yet soluble state condition in the cytosol to ensure their proper delivery to the proteasome. Also required for selective ubiquitin-mediated degradation of defective nascent chain polypeptides by the proteasome. Also involved in endoplasmic reticulum stress-induced pre-emptive quality control, a mechanism that selectively attenuates the translocation of newly synthesized proteins into the endoplasmic reticulum and reroutes them to the cytosol for proteasomal degradation. May ensure the proper degradation of these proteins and thereby protects the endoplasmic reticulum from protein overload upon stress. By stabilizing a large spectrum of proteins, may indirectly affect different biological processes including apoptosis. By controlling the steady-state expression of the IGF1R receptor, indirectly regulates the insulin-like growth factor receptor signaling pathway. In terms of biological role, when nuclear, may also act as a component of some chromatin regulator complex. The protein is Large proline-rich protein bag6-B of Xenopus laevis (African clawed frog).